A 51-amino-acid chain; its full sequence is Insulin (51 aa).

3 disulfides stabilise this stretch: cysteine 7-cysteine 37, cysteine 19-cysteine 50, and cysteine 36-cysteine 41.

This sequence belongs to the insulin family. Heterodimer of a B chain and an A chain linked by two disulfide bonds.

The protein resides in the secreted. Functionally, insulin decreases blood glucose concentration. It increases cell permeability to monosaccharides, amino acids and fatty acids. It accelerates glycolysis, the pentose phosphate cycle, and glycogen synthesis in liver. This chain is Insulin (INS), found in Balaenoptera physalus (Fin whale).